The following is a 510-amino-acid chain: 2-isopropylmalate synthase (510 aa).

Positions 5–267 (LVIFDTTLRD…DTRIDTTQIV (263 aa)) constitute a Pyruvate carboxyltransferase domain. Mn(2+)-binding residues include D14, H202, H204, and N238. The interval 392–510 (RLLSLHAVSE…SSLERTHPQI (119 aa)) is regulatory domain.

This sequence belongs to the alpha-IPM synthase/homocitrate synthase family. LeuA type 1 subfamily. Homodimer. The cofactor is Mn(2+).

The protein localises to the cytoplasm. The enzyme catalyses 3-methyl-2-oxobutanoate + acetyl-CoA + H2O = (2S)-2-isopropylmalate + CoA + H(+). Its pathway is amino-acid biosynthesis; L-leucine biosynthesis; L-leucine from 3-methyl-2-oxobutanoate: step 1/4. Its function is as follows. Catalyzes the condensation of the acetyl group of acetyl-CoA with 3-methyl-2-oxobutanoate (2-ketoisovalerate) to form 3-carboxy-3-hydroxy-4-methylpentanoate (2-isopropylmalate). In Nitrosomonas europaea (strain ATCC 19718 / CIP 103999 / KCTC 2705 / NBRC 14298), this protein is 2-isopropylmalate synthase.